The sequence spans 254 residues: 3-deoxy-manno-octulosonate cytidylyltransferase (254 aa).

This sequence belongs to the KdsB family.

Its subcellular location is the cytoplasm. The enzyme catalyses 3-deoxy-alpha-D-manno-oct-2-ulosonate + CTP = CMP-3-deoxy-beta-D-manno-octulosonate + diphosphate. It functions in the pathway nucleotide-sugar biosynthesis; CMP-3-deoxy-D-manno-octulosonate biosynthesis; CMP-3-deoxy-D-manno-octulosonate from 3-deoxy-D-manno-octulosonate and CTP: step 1/1. The protein operates within bacterial outer membrane biogenesis; lipopolysaccharide biosynthesis. Functionally, activates KDO (a required 8-carbon sugar) for incorporation into bacterial lipopolysaccharide in Gram-negative bacteria. The polypeptide is 3-deoxy-manno-octulosonate cytidylyltransferase (Pseudomonas putida (strain W619)).